The following is an 816-amino-acid chain: S-layer protein (816 aa).

Positions 1-29 (MAKTNSYKKVIAGTMTAAMVAGVVSPVAA) are cleaved as a signal peptide. SLH domains follow at residues 30 to 93 (AGKS…DAKP), 94 to 150 (SFAD…KVNG), and 152 to 215 (PATK…VAKV). A BIG2 domain is found at 403-480 (FTSKDFKQND…TVKDSKGKEL (78 aa)).

The protein resides in the secreted. It is found in the cell wall. The protein localises to the S-layer. Functionally, the S-layer is a paracrystalline mono-layered assembly of proteins which coat the surface of bacteria. This is S-layer protein from Bacillus thuringiensis subsp. finitimus.